A 331-amino-acid chain; its full sequence is Putative heme-binding peroxidase (331 aa).

The Proton acceptor role is filled by histidine 50. Histidine 174 lines the heme b pocket. Tryptophan 190 serves as the catalytic Tryptophan radical intermediate. The disordered stretch occupies residues 288 to 331 (INTDNQKGGYRSAPKKSDSTPATSGQPGASKTGGCPVMHHKAKL). Residues 306 to 316 (STPATSGQPGA) are compositionally biased toward polar residues.

This sequence belongs to the peroxidase family. Cytochrome c peroxidase subfamily. The cofactor is heme b.

Its function is as follows. Destroys radicals which are normally produced within the cells and which are toxic to biological systems. This chain is Putative heme-binding peroxidase, found in Gibberella zeae (strain ATCC MYA-4620 / CBS 123657 / FGSC 9075 / NRRL 31084 / PH-1) (Wheat head blight fungus).